Consider the following 269-residue polypeptide: Thiazole synthase (269 aa).

Lys-109 serves as the catalytic Schiff-base intermediate with DXP. Residues Gly-170, 196–197 (AG), and 218–219 (NT) contribute to the 1-deoxy-D-xylulose 5-phosphate site.

The protein belongs to the ThiG family. As to quaternary structure, homotetramer. Forms heterodimers with either ThiH or ThiS.

It localises to the plastid. Its subcellular location is the chloroplast. It catalyses the reaction [ThiS sulfur-carrier protein]-C-terminal-Gly-aminoethanethioate + 2-iminoacetate + 1-deoxy-D-xylulose 5-phosphate = [ThiS sulfur-carrier protein]-C-terminal Gly-Gly + 2-[(2R,5Z)-2-carboxy-4-methylthiazol-5(2H)-ylidene]ethyl phosphate + 2 H2O + H(+). Its pathway is cofactor biosynthesis; thiamine diphosphate biosynthesis. Its function is as follows. Catalyzes the rearrangement of 1-deoxy-D-xylulose 5-phosphate (DXP) to produce the thiazole phosphate moiety of thiamine. Sulfur is provided by the thiocarboxylate moiety of the carrier protein ThiS. In vitro, sulfur can be provided by H(2)S. The sequence is that of Thiazole synthase from Phaeodactylum tricornutum (strain CCAP 1055/1).